Reading from the N-terminus, the 322-residue chain is Protease HtpX homolog (322 aa).

A run of 2 helical transmembrane segments spans residues 19–39 (ILLI…CYLL) and 61–81 (FINL…IAYF). His165 provides a ligand contact to Zn(2+). The active site involves Glu166. Zn(2+) is bound at residue His169. The next 2 membrane-spanning stretches (helical) occupy residues 175–195 (VRLL…AQIA) and 216–236 (ILIL…ATLM). Glu245 is a binding site for Zn(2+).

This sequence belongs to the peptidase M48B family. Requires Zn(2+) as cofactor.

It is found in the cell inner membrane. The sequence is that of Protease HtpX homolog from Bacteroides fragilis (strain YCH46).